Here is a 239-residue protein sequence, read N- to C-terminus: Ribose-5-phosphate isomerase A (239 aa).

Residues Ser-39–Thr-42, Asp-95–Asp-98, and Lys-108–Gly-111 each bind substrate. The active-site Proton acceptor is Glu-117. Lys-135 provides a ligand contact to substrate.

The protein belongs to the ribose 5-phosphate isomerase family. Homodimer.

The catalysed reaction is aldehydo-D-ribose 5-phosphate = D-ribulose 5-phosphate. It functions in the pathway carbohydrate degradation; pentose phosphate pathway; D-ribose 5-phosphate from D-ribulose 5-phosphate (non-oxidative stage): step 1/1. In terms of biological role, catalyzes the reversible conversion of ribose-5-phosphate to ribulose 5-phosphate. In Chlamydia muridarum (strain MoPn / Nigg), this protein is Ribose-5-phosphate isomerase A.